We begin with the raw amino-acid sequence, 453 residues long: Trigger factor (453 aa).

The 86-residue stretch at 171–256 (GDRVTISFKG…ATVLEAPQES (86 aa)) folds into the PPIase FKBP-type domain.

The protein belongs to the FKBP-type PPIase family. Tig subfamily.

The protein localises to the cytoplasm. The catalysed reaction is [protein]-peptidylproline (omega=180) = [protein]-peptidylproline (omega=0). Involved in protein export. Acts as a chaperone by maintaining the newly synthesized protein in an open conformation. Functions as a peptidyl-prolyl cis-trans isomerase. This Rhodopseudomonas palustris (strain BisB18) protein is Trigger factor.